We begin with the raw amino-acid sequence, 154 residues long: SsrA-binding protein (154 aa).

Positions 126–154 (GKKKYDKREDMKKKEAQREVERAFRERQK) are disordered. A compositionally biased stretch (basic and acidic residues) spans 131–154 (DKREDMKKKEAQREVERAFRERQK).

Belongs to the SmpB family.

It is found in the cytoplasm. Its function is as follows. Required for rescue of stalled ribosomes mediated by trans-translation. Binds to transfer-messenger RNA (tmRNA), required for stable association of tmRNA with ribosomes. tmRNA and SmpB together mimic tRNA shape, replacing the anticodon stem-loop with SmpB. tmRNA is encoded by the ssrA gene; the 2 termini fold to resemble tRNA(Ala) and it encodes a 'tag peptide', a short internal open reading frame. During trans-translation Ala-aminoacylated tmRNA acts like a tRNA, entering the A-site of stalled ribosomes, displacing the stalled mRNA. The ribosome then switches to translate the ORF on the tmRNA; the nascent peptide is terminated with the 'tag peptide' encoded by the tmRNA and targeted for degradation. The ribosome is freed to recommence translation, which seems to be the essential function of trans-translation. The sequence is that of SsrA-binding protein from Anoxybacillus flavithermus (strain DSM 21510 / WK1).